The primary structure comprises 277 residues: Shikimate dehydrogenase (NADP(+)) (277 aa).

Shikimate contacts are provided by residues S17–S19 and T64. K68 (proton acceptor) is an active-site residue. N88 and D103 together coordinate shikimate. NADP(+) is bound by residues G128–S132, N152–R157, and L217. Y219 is a shikimate binding site. G240 serves as a coordination point for NADP(+).

The protein belongs to the shikimate dehydrogenase family. Homodimer.

It catalyses the reaction shikimate + NADP(+) = 3-dehydroshikimate + NADPH + H(+). Its pathway is metabolic intermediate biosynthesis; chorismate biosynthesis; chorismate from D-erythrose 4-phosphate and phosphoenolpyruvate: step 4/7. In terms of biological role, involved in the biosynthesis of the chorismate, which leads to the biosynthesis of aromatic amino acids. Catalyzes the reversible NADPH linked reduction of 3-dehydroshikimate (DHSA) to yield shikimate (SA). This Rhodopseudomonas palustris (strain BisB18) protein is Shikimate dehydrogenase (NADP(+)).